Consider the following 770-residue polypeptide: Molybdenum cofactor sulfurase (770 aa).

N6-(pyridoxal phosphate)lysine is present on Lys-243. Cys-405 is a catalytic residue. One can recognise an MOSC domain in the interval 611-769; that stretch reads GDEVANWLCQ…LACGDPITVL (159 aa). Ser-726 carries the post-translational modification Phosphoserine.

It belongs to the class-V pyridoxal-phosphate-dependent aminotransferase family. MOCOS subfamily. Pyridoxal 5'-phosphate serves as cofactor.

The catalysed reaction is Mo-molybdopterin + L-cysteine + AH2 = thio-Mo-molybdopterin + L-alanine + A + H2O. It functions in the pathway cofactor biosynthesis; molybdopterin biosynthesis. Its function is as follows. Sulfurates the molybdenum cofactor. Sulfation of molybdenum is essential for xanthine dehydrogenase (XDH) and aldehyde oxidase (ADO) enzymes in which molybdenum cofactor is liganded by 1 oxygen and 1 sulfur atom in active form. The sequence is that of Molybdenum cofactor sulfurase from Drosophila grimshawi (Hawaiian fruit fly).